Here is a 295-residue protein sequence, read N- to C-terminus: Ribosomal protein L11 methyltransferase (295 aa).

The S-adenosyl-L-methionine site is built by Thr-146, Gly-167, Asp-189, and Asn-231.

Belongs to the methyltransferase superfamily. PrmA family.

Its subcellular location is the cytoplasm. It catalyses the reaction L-lysyl-[protein] + 3 S-adenosyl-L-methionine = N(6),N(6),N(6)-trimethyl-L-lysyl-[protein] + 3 S-adenosyl-L-homocysteine + 3 H(+). Methylates ribosomal protein L11. This is Ribosomal protein L11 methyltransferase from Vibrio cholerae serotype O1 (strain ATCC 39541 / Classical Ogawa 395 / O395).